A 300-amino-acid polypeptide reads, in one-letter code: Protoheme IX farnesyltransferase (300 aa).

9 consecutive transmembrane segments (helical) span residues 24 to 44, 48 to 68, 94 to 114, 118 to 138, 146 to 166, 172 to 192, 217 to 237, 239 to 259, and 278 to 298; these read VTQL…PGMV, VLLG…AINC, LQIL…LYTF, LTIW…TLLL, IVIG…AVTG, AWIL…VLAL, LHIL…FISG, SGAV…AYAW, and IVYL…RPVI.

It belongs to the UbiA prenyltransferase family. Protoheme IX farnesyltransferase subfamily.

It is found in the cell inner membrane. The catalysed reaction is heme b + (2E,6E)-farnesyl diphosphate + H2O = Fe(II)-heme o + diphosphate. It participates in porphyrin-containing compound metabolism; heme O biosynthesis; heme O from protoheme: step 1/1. Converts heme B (protoheme IX) to heme O by substitution of the vinyl group on carbon 2 of heme B porphyrin ring with a hydroxyethyl farnesyl side group. This chain is Protoheme IX farnesyltransferase, found in Burkholderia mallei (strain NCTC 10247).